The sequence spans 447 residues: UDP-glycosyltransferase 76E3 (447 aa).

UDP-alpha-D-glucose is bound by residues S269, 328–330, 345–353, and 367–370; these read APQ, HCGWNSTLE, and QGEQ.

This sequence belongs to the UDP-glycosyltransferase family.

The protein is UDP-glycosyltransferase 76E3 (UGT76E3) of Arabidopsis thaliana (Mouse-ear cress).